A 178-amino-acid chain; its full sequence is Large ribosomal subunit protein eL20 (178 aa).

It belongs to the eukaryotic ribosomal protein eL20 family.

The chain is Large ribosomal subunit protein eL20 (RPL18A) from Oryza sativa subsp. japonica (Rice).